Here is a 154-residue protein sequence, read N- to C-terminus: Ribosome maturation factor RimP (154 aa).

Belongs to the RimP family.

Its subcellular location is the cytoplasm. Required for maturation of 30S ribosomal subunits. The protein is Ribosome maturation factor RimP of Acetivibrio thermocellus (strain ATCC 27405 / DSM 1237 / JCM 9322 / NBRC 103400 / NCIMB 10682 / NRRL B-4536 / VPI 7372) (Clostridium thermocellum).